The following is a 666-amino-acid chain: Probable potassium transport system protein Kup (666 aa).

12 helical membrane passes run 16-36, 58-78, 100-120, 141-161, 165-185, 221-241, 253-273, 294-314, 343-363, 373-393, 399-419, and 424-444; these read GFII…LYTM, ISLI…LIAL, PWLI…GALT, IYQN…VLFG, FGTG…FSFL, IFIL…YSDL, WPFV…WILA, VYLV…LISG, LYIP…VLAF, YGLA…YYLI, PILA…FFLA, and FMHG…VMFI.

It belongs to the HAK/KUP transporter (TC 2.A.72) family.

It localises to the cell membrane. It catalyses the reaction K(+)(in) + H(+)(in) = K(+)(out) + H(+)(out). Transport of potassium into the cell. Likely operates as a K(+):H(+) symporter. In Streptococcus pyogenes serotype M4 (strain MGAS10750), this protein is Probable potassium transport system protein Kup.